A 488-amino-acid polypeptide reads, in one-letter code: WD repeat-containing protein slp1 (488 aa).

2 disordered regions span residues M1–P29 and C74–S93. The span at S7 to P17 shows a compositional bias: low complexity. WD repeat units follow at residues I178 to L215, D219 to T258, G261 to G298, G302 to T341, N344 to T386, D388 to Q429, and A434 to R473.

The protein belongs to the WD repeat CDC20/Fizzy family. In terms of assembly, interacts with cdc13, mad3 and mes1.

Required for mad2-dependent spindle checkpoint activation. Promotes ubiquitin-dependent degradation of cdc13 by the anaphase promoting complex/cyclosome (APC/C). The protein is WD repeat-containing protein slp1 (slp1) of Schizosaccharomyces pombe (strain 972 / ATCC 24843) (Fission yeast).